The primary structure comprises 441 residues: MNPVVISVCVMLVLALMRVNVVVALTFSAIVGGLVAGMSLGDTVAAFESGLGGGATIALSYAMLGTFAVAISKSGITDLLAKSVIKRLNGKESAASTTGLKYAVLVALVLVTMSSQNVIPVHIAFIPILIPPLLGVFAKLKLDRRLIACVLTFGLITPYMVLPVGFGGIFLNNILLKNLHDNGLENVVASQVPTAMLLPGAGMIFGLLLAIFVSYRKPREYKETELTVVHETDHSINKQHILVAALGIIAALGVQLYTGSMIIGALAGFMVFTFGGVIAWKETHDVFTKGVHMMAMIGFIMIAAAGFAAVMKQTGGVETLVQSLSTSIGDNKPLAALLMLVVGLLVTMGIGSSFSTIPILATIYVPLSLAFGFSPMATIALVGTAAALGDAGSPASDSTLGPTSGLNADGQHEHIWETVVPTFIHYNIPLIIFGWIAAMVL.

The next 12 membrane-spanning stretches (helical) occupy residues 21–41, 51–71, 94–114, 118–138, 150–170, 195–215, 239–259, 260–280, 291–311, 334–354, 363–383, and 419–439; these read VVVALTFSAIVGGLVAGMSLG, LGGGATIALSYAMLGTFAVAI, AASTTGLKYAVLVALVLVTMS, VIPVHIAFIPILIPPLLGVFA, VLTFGLITPYMVLPVGFGGIF, AMLLPGAGMIFGLLLAIFVSY, QHILVAALGIIAALGVQLYTG, SMIIGALAGFMVFTFGGVIAW, VHMMAMIGFIMIAAAGFAAVM, LAALLMLVVGLLVTMGIGSSF, IYVPLSLAFGFSPMATIALVG, and VVPTFIHYNIPLIIFGWIAAM.

It localises to the cell membrane. This is an uncharacterized protein from Vibrio parahaemolyticus serotype O3:K6 (strain RIMD 2210633).